A 716-amino-acid chain; its full sequence is 1,4-alpha-glucan branching enzyme GlgB (716 aa).

Asp399 acts as the Nucleophile in catalysis. Catalysis depends on Glu452, which acts as the Proton donor.

It belongs to the glycosyl hydrolase 13 family. GlgB subfamily. Monomer.

It catalyses the reaction Transfers a segment of a (1-&gt;4)-alpha-D-glucan chain to a primary hydroxy group in a similar glucan chain.. It functions in the pathway glycan biosynthesis; glycogen biosynthesis. Its function is as follows. Catalyzes the formation of the alpha-1,6-glucosidic linkages in glycogen by scission of a 1,4-alpha-linked oligosaccharide from growing alpha-1,4-glucan chains and the subsequent attachment of the oligosaccharide to the alpha-1,6 position. This Rhodopseudomonas palustris (strain ATCC BAA-98 / CGA009) protein is 1,4-alpha-glucan branching enzyme GlgB.